The primary structure comprises 141 residues: Hemoglobin subunit alpha-A (141 aa).

The Globin domain maps to 1-141 (VLSSGDKANV…VSTVLTSKYR (141 aa)). Position 58 (His-58) interacts with O2. His-87 is a heme b binding site.

Belongs to the globin family. As to quaternary structure, heterotetramer of two alpha chains and two beta chains. Red blood cells.

Its function is as follows. Involved in oxygen transport from the lung to the various peripheral tissues. This chain is Hemoglobin subunit alpha-A (HBAA), found in Caretta caretta (Loggerhead sea turtle).